Here is a 139-residue protein sequence, read N- to C-terminus: Cytochrome c-type biogenesis protein CcmE 2 (139 aa).

Residues 1-9 (MASLKKSRR) are Cytoplasmic-facing. The helical; Signal-anchor for type II membrane protein transmembrane segment at 10–30 (VRLILFSGVALVSATALIGYA) threads the bilayer. The Periplasmic segment spans residues 31–139 (MRDGIQFFRT…ELAEMEALRD (109 aa)). Residues His-122 and Tyr-126 each coordinate heme.

The protein belongs to the CcmE/CycJ family.

It localises to the cell inner membrane. Heme chaperone required for the biogenesis of c-type cytochromes. Transiently binds heme delivered by CcmC and transfers the heme to apo-cytochromes in a process facilitated by CcmF and CcmH. This is Cytochrome c-type biogenesis protein CcmE 2 from Ruegeria pomeroyi (strain ATCC 700808 / DSM 15171 / DSS-3) (Silicibacter pomeroyi).